Consider the following 272-residue polypeptide: Elongation factor Ts (272 aa).

An involved in Mg(2+) ion dislocation from EF-Tu region spans residues 86-89 (TDFV).

Belongs to the EF-Ts family.

Its subcellular location is the cytoplasm. Functionally, associates with the EF-Tu.GDP complex and induces the exchange of GDP to GTP. It remains bound to the aminoacyl-tRNA.EF-Tu.GTP complex up to the GTP hydrolysis stage on the ribosome. This is Elongation factor Ts from Blochmanniella pennsylvanica (strain BPEN).